The sequence spans 347 residues: UDP-N-acetylglucosamine--N-acetylmuramyl-(pentapeptide) pyrophosphoryl-undecaprenol N-acetylglucosamine transferase (347 aa).

UDP-N-acetyl-alpha-D-glucosamine is bound by residues 11-13 (TGG), asparagine 122, arginine 163, serine 189, and glutamine 279.

It belongs to the glycosyltransferase 28 family. MurG subfamily.

Its subcellular location is the cell inner membrane. It catalyses the reaction di-trans,octa-cis-undecaprenyl diphospho-N-acetyl-alpha-D-muramoyl-L-alanyl-D-glutamyl-meso-2,6-diaminopimeloyl-D-alanyl-D-alanine + UDP-N-acetyl-alpha-D-glucosamine = di-trans,octa-cis-undecaprenyl diphospho-[N-acetyl-alpha-D-glucosaminyl-(1-&gt;4)]-N-acetyl-alpha-D-muramoyl-L-alanyl-D-glutamyl-meso-2,6-diaminopimeloyl-D-alanyl-D-alanine + UDP + H(+). Its pathway is cell wall biogenesis; peptidoglycan biosynthesis. In terms of biological role, cell wall formation. Catalyzes the transfer of a GlcNAc subunit on undecaprenyl-pyrophosphoryl-MurNAc-pentapeptide (lipid intermediate I) to form undecaprenyl-pyrophosphoryl-MurNAc-(pentapeptide)GlcNAc (lipid intermediate II). This is UDP-N-acetylglucosamine--N-acetylmuramyl-(pentapeptide) pyrophosphoryl-undecaprenol N-acetylglucosamine transferase from Sulfurihydrogenibium sp. (strain YO3AOP1).